Consider the following 1984-residue polypeptide: Sodium channel protein type 9 subunit alpha (1984 aa).

Residues 1–125 (MAMLPPPGPQ…RRISIKILVH (125 aa)) are Cytoplasmic-facing. A compositionally biased stretch (basic and acidic residues) spans 26-39 (RISEEKAKEHKDEK). Residues 26-55 (RISEEKAKEHKDEKKDDEEEGPKPSSDLEA) form a disordered region. The I repeat unit spans residues 112-410 (FSPLRRISIK…VAMAYEEQNQ (299 aa)). The chain crosses the membrane as a helical span at residues 126–145 (SLFSMLIMCTILTNCIFMTL). Over 146–150 (SNPPE) the chain is Extracellular. The helical transmembrane segment at 151–172 (WTKNVEYTFTGIYTFESLIKIL) threads the bilayer. Topologically, residues 173-185 (ARGFCVGEFTFLR) are cytoplasmic. The chain crosses the membrane as a helical span at residues 186–204 (DPWNWLDFVVIVFAYLTEF). The Extracellular portion of the chain corresponds to 205 to 210 (VNLGNV). N-linked (GlcNAc...) asparagine glycosylation occurs at Asn209. Residues 211–227 (SALRTFRVLRALKTISV) form a helical membrane-spanning segment. Residues 228–241 (IPGLKTIVGALIQS) lie on the Cytoplasmic side of the membrane. The helical transmembrane segment at 242–267 (VKKLSDVMILTVFCLSVFALIGLQLF) threads the bilayer. The Extracellular segment spans residues 268-346 (MGNLKHKCFR…PDYGYTSFDT (79 aa)). Cysteines 275 and 324 form a disulfide. N-linked (GlcNAc...) asparagine glycosylation occurs at Asn283. Positions 347–363 (FSWAFLALFRLMTQDYW) form an intramembrane region, pore-forming. Residues 364-376 (ENLYQQTLRAAGK) are Extracellular-facing. A helical transmembrane segment spans residues 377–402 (TYMIFFVVVIFLGSFYLINLILAVVA). The Cytoplasmic segment spans residues 403–744 (MAYEEQNQAN…LIYFIVMDPF (342 aa)). Residues 461–471 (SSSETSRLSSK) show a composition bias toward low complexity. Disordered regions lie at residues 461 to 542 (SSSE…RGSL) and 576 to 609 (IFGD…RSPP). The segment covering 474–486 (KERRNRRKKKKQK) has biased composition (basic residues). The span at 489–509 (SGEEKGDDEKLSKSGSEESIR) shows a compositional bias: basic and acidic residues. One copy of the II repeat lies at 725 to 988 (CSPYWIKFKK…EEDTDANNLQ (264 aa)). Residues 745–761 (VDLAITICIVLNTLFMA) traverse the membrane as a helical segment. The Extracellular segment spans residues 762 to 770 (MEHHPMTEE). A helical transmembrane segment spans residues 771–795 (FKNVLAVGNLIFTGIFAAEMVLKLI). Topologically, residues 796 to 804 (AMDPYEYFQ) are cytoplasmic. The chain crosses the membrane as a helical span at residues 805-821 (VGWNIFDSLIVTLSLIE). The Extracellular segment spans residues 822-830 (LFLADVEGL). Residues 831–847 (SVLRSFRLLRVFKLAKS) form a helical membrane-spanning segment. The Cytoplasmic segment spans residues 848–864 (WPTLNMLIKIIGNSVGA). A helical membrane pass occupies residues 865 to 887 (LGNLTLVLAIIVFIFAVVGMQLF). The Extracellular segment spans residues 888–914 (GKSYKECVCKINVDCKLPRWHMNDFFH). An intrachain disulfide couples Cys896 to Cys902. Residues 915–927 (SFLIVFRVLCGEW) constitute an intramembrane region (pore-forming). Residues 928 to 939 (IETMWDCMEVAG) are Extracellular-facing. A disulfide bridge connects residues Cys934 and Cys943. The helical transmembrane segment at 940–966 (QTMCLIVYMMVMVIGNLVVLNLFLALL) threads the bilayer. Residues 967–1185 (LSSFSSDNLT…WWTIRKTCYR (219 aa)) lie on the Cytoplasmic side of the membrane. 2 disordered regions span residues 1015 to 1040 (KKPK…ISNR) and 1103 to 1145 (EELS…EPVN). The segment covering 1019–1035 (GSKDTKRTADPNNKKEN) has biased composition (basic and acidic residues). Acidic residues predominate over residues 1135–1145 (GEEEAEAEPVN). The III repeat unit spans residues 1178–1486 (TIRKTCYRIV…KKYYNAMKKL (309 aa)). A helical membrane pass occupies residues 1186 to 1210 (IVEHSWFESFIVLMILLSSGALAFE). The Extracellular portion of the chain corresponds to 1211 to 1222 (DIYIEKKKTIKI). A helical transmembrane segment spans residues 1223 to 1248 (ILEYADKIFTYIFILEMLLKWVAYGY). Over 1249-1250 (KT) the chain is Cytoplasmic. The chain crosses the membrane as a helical span at residues 1251-1276 (YFTNAWCWLDFLIVDVSLVTLVANTL). The Extracellular portion of the chain corresponds to 1277 to 1285 (GYSDLGPIK). A helical membrane pass occupies residues 1286-1302 (SLRTLRALRPLRALSRF). At 1303-1315 (EGMRVVVNALIGA) the chain is on the cytoplasmic side. The chain crosses the membrane as a helical span at residues 1316 to 1340 (IPSIMNVLLVCLIFWLIFSIMGVNL). Over 1341 to 1392 (FAGKFYECVNTTDGSRFPTSQVANRSECFALMNVSGNVRWKNLKVNFDNVGL) the chain is Extracellular. Cys1348 and Cys1368 are oxidised to a cystine. N-linked (GlcNAc...) asparagine glycans are attached at residues Asn1350, Asn1364, and Asn1373. The pore-forming intramembrane region spans 1393–1403 (GYLSLLQVATF). Over 1404–1429 (KGWMDIMYAAVDSVNVNEQPKYEYSL) the chain is Extracellular. A helical transmembrane segment spans residues 1430–1455 (YMYIYFVIFIIFGSFFTLNLFIGVII). Residues 1456-1512 (DNFNQQKKKLGGQDIFMTEEQKKYYNAMKKLGSKKPQKPIPRPGNKFQGCIFDLVTN) lie on the Cytoplasmic side of the membrane. Ser1488 carries the post-translational modification Phosphoserine; by PKC. Residues 1495 to 1793 (IPRPGNKFQG…WEKFDPDATQ (299 aa)) form an IV repeat. A helical membrane pass occupies residues 1513 to 1532 (QAFDITIMVLICLNMVTMMV). Residues 1533 to 1543 (EKEGQTEYMDY) lie on the Extracellular side of the membrane. Residues 1544 to 1565 (VLHWINMVFIILFTGECVLKLI) traverse the membrane as a helical segment. The Cytoplasmic segment spans residues 1566 to 1574 (SLRHYYFTV). A helical membrane pass occupies residues 1575–1596 (GWNIFDFVVVILSIVGMFLAEM). Over 1597–1605 (IEKYFVSPT) the chain is Extracellular. A helical membrane pass occupies residues 1606 to 1625 (LFRVIRLARIGRILRLIKGA). Over 1626 to 1638 (KGIRTLLFALMMS) the chain is Cytoplasmic. A helical membrane pass occupies residues 1639–1661 (LPALFNIGLLLFLVMFIYAIFGM). Residues 1662-1684 (SNFAYVKKEAGINDMFNFETFGN) lie on the Extracellular side of the membrane. Positions 1685–1697 (SMICLFQITTSAG) form an intramembrane region, pore-forming. Over 1698 to 1731 (WDGLLAPILNSAPPDCDPKKVHPGSSVEGDCGNP) the chain is Extracellular. Cys1713 and Cys1728 are joined by a disulfide. Residues 1732 to 1757 (SVGIFYFVSYIIISFLVVVNMYIAVI) traverse the membrane as a helical segment. At 1758 to 1984 (LENFSVATEE…EDKEKDESRK (227 aa)) the chain is on the cytoplasmic side. An IQ domain is found at 1887 to 1916 (EEVSATIIQRAYRRYRLRQHVKNISSIYIK). Basic and acidic residues predominate over residues 1916-1930 (KDGDRDDDLPNKEDT). Positions 1916–1984 (KDGDRDDDLP…EDKEKDESRK (69 aa)) are disordered. Polar residues predominate over residues 1946 to 1958 (VTASTISPPSYDS). Residues 1960–1984 (TKPDQEKYETDKTEKEDKEKDESRK) are compositionally biased toward basic and acidic residues.

Belongs to the sodium channel (TC 1.A.1.10) family. Nav1.7/SCN9A subfamily. In terms of assembly, the Nav1.7 voltage-gated sodium channel consists of an ion-conducting alpha subunit SCN9A which is functional on its own regulated by one or more beta-1 (SCN1B), beta-2 (SCN2B), beta-3 (SCN3B) and beta-4 (SCN4B) subunits. SCN1B and SCN3B are non-covalently associated with SCN9A. SCN2B and SCN4B are disulfide-linked to SCN9A. SCN1B regulates channel inactivation. Interacts with NEDD4 and NEDD4L; regulates Nav1.7 activity most probably through ubiquitination and subsequent endocytosis. Interacts with TMEM233; modulates the gating properties of NaV1.7. Post-translationally, phosphorylation at Ser-1488 by PKC in a highly conserved cytoplasmic loop increases peak sodium currents. In terms of processing, ubiquitinated by NEDD4L; which may promote its endocytosis. Does not seem to be ubiquitinated by NEDD4. Ubiquitinated by NEDD4L; which may promote its endocytosis. As to expression, expressed at high level in the dorsal root ganglion and at much lower levels in the brain, sciatic nerve, nodose ganglia, heart, thyroid and adrenal glands and Schwann cells, but not in the cardiac and skeletal muscles, brain and liver.

The protein localises to the cell membrane. It is found in the cell projection. Its subcellular location is the neuron projection. It localises to the axon. It carries out the reaction Na(+)(in) = Na(+)(out). With respect to regulation, inhibited by the conotoxin GVIIJ. Functionally, pore-forming subunit of Nav1.7, a voltage-gated sodium (Nav) channel that directly mediates the depolarizing phase of action potentials in excitable membranes. Navs, also called VGSCs (voltage-gated sodium channels) or VDSCs (voltage-dependent sodium channels), operate by switching between closed and open conformations depending on the voltage difference across the membrane. In the open conformation they allow Na(+) ions to selectively pass through the pore, along their electrochemical gradient. The influx of Na(+) ions provokes membrane depolarization, initiating the propagation of electrical signals throughout cells and tissues. Nav1.7 plays a crucial role in controlling the excitability and action potential propagation from nociceptor neurons, thereby contributing to the sensory perception of pain. This chain is Sodium channel protein type 9 subunit alpha, found in Rattus norvegicus (Rat).